The primary structure comprises 98 residues: Protein S100-A13 (98 aa).

One can recognise an EF-hand domain in the interval 18–53 (STFFTFAGREGRKGSLNINEFKELATQQLPHLLKDV). The Ca(2+) site is built by serine 32, glutamate 37, aspartate 64, asparagine 66, aspartate 68, glutamate 70, and glutamate 75. Serine 32 carries the phosphoserine modification.

Belongs to the S-100 family. As to quaternary structure, homodimer. Part of a copper-dependent multiprotein complex containing S100A13, FGF1 and SYT1. Interacts with FGF1 and SYT1. Interacts with IL1A.

Its subcellular location is the cytoplasm. It localises to the secreted. Its function is as follows. Plays a role in the export of proteins that lack a signal peptide and are secreted by an alternative pathway. Binds two calcium ions per subunit. Binds one copper ion. Binding of one copper ion does not interfere with calcium binding. Required for the copper-dependent stress-induced export of IL1A and FGF1. The calcium-free protein binds to lipid vesicles containing phosphatidylserine, but not to vesicles containing phosphatidylcholine. The polypeptide is Protein S100-A13 (S100a13) (Mus musculus (Mouse)).